The primary structure comprises 93 residues: Small ribosomal subunit protein uS19 (93 aa).

It belongs to the universal ribosomal protein uS19 family.

In terms of biological role, protein S19 forms a complex with S13 that binds strongly to the 16S ribosomal RNA. The protein is Small ribosomal subunit protein uS19 of Symbiobacterium thermophilum (strain DSM 24528 / JCM 14929 / IAM 14863 / T).